A 266-amino-acid chain; its full sequence is MAINTSRTQILFITIISFLILAQNVNSAAFTVSNFDPYKTNIELEGNAFISDGSIHLTNVIPNSAGRASWGGPVRLWDADTGNLAGFTSVFSFEVAPAGPGLIGDGITFFIAPFNSHIPKNSSGGFLGLFNAETALNTYQNRIVAVEFDSFGGNSGGNPWDPAYPHVGIDVNSIASVTTAPWKTGSILTGFNAIAFVNYEPVEKNLSVVVRYPGGNFVNGTSNSVSFIIDLRTVLPEWVRIGFSGATGQLVELHKILSWTFKSSFQ.

The first 27 residues, 1-27 (MAINTSRTQILFITIISFLILAQNVNS), serve as a signal peptide directing secretion. N-linked (GlcNAc...) asparagine glycosylation is found at asparagine 121, asparagine 205, and asparagine 219.

This sequence belongs to the leguminous lectin family.

Functionally, may be involved in arbuscular mycorrhizal (AM) symbiosis with AM fungi. This chain is Lectin 7, found in Medicago truncatula (Barrel medic).